The following is a 210-amino-acid chain: ATP-dependent Clp protease proteolytic subunit (210 aa).

Serine 107 serves as the catalytic Nucleophile. Histidine 132 is an active-site residue.

Belongs to the peptidase S14 family. In terms of assembly, fourteen ClpP subunits assemble into 2 heptameric rings which stack back to back to give a disk-like structure with a central cavity, resembling the structure of eukaryotic proteasomes.

It is found in the cytoplasm. The catalysed reaction is Hydrolysis of proteins to small peptides in the presence of ATP and magnesium. alpha-casein is the usual test substrate. In the absence of ATP, only oligopeptides shorter than five residues are hydrolyzed (such as succinyl-Leu-Tyr-|-NHMec, and Leu-Tyr-Leu-|-Tyr-Trp, in which cleavage of the -Tyr-|-Leu- and -Tyr-|-Trp bonds also occurs).. Functionally, cleaves peptides in various proteins in a process that requires ATP hydrolysis. Has a chymotrypsin-like activity. Plays a major role in the degradation of misfolded proteins. In Chromobacterium violaceum (strain ATCC 12472 / DSM 30191 / JCM 1249 / CCUG 213 / NBRC 12614 / NCIMB 9131 / NCTC 9757 / MK), this protein is ATP-dependent Clp protease proteolytic subunit.